The chain runs to 311 residues: Energy-coupling factor transporter ATP-binding protein EcfA (311 aa).

The region spanning 2–237 is the ABC transporter domain; that stretch reads IELRDLSYSY…AELIRRASLR (236 aa). 35–42 lines the ATP pocket; the sequence is GPNGAGKS.

The protein belongs to the ABC transporter superfamily. Energy-coupling factor EcfA family. As to quaternary structure, forms a stable energy-coupling factor (ECF) transporter complex composed of 2 membrane-embedded substrate-binding proteins (S component), 2 ATP-binding proteins (A component) and 2 transmembrane proteins (T component).

It localises to the cell membrane. Its function is as follows. ATP-binding (A) component of a common energy-coupling factor (ECF) ABC-transporter complex. Unlike classic ABC transporters this ECF transporter provides the energy necessary to transport a number of different substrates. This chain is Energy-coupling factor transporter ATP-binding protein EcfA, found in Methanothermobacter thermautotrophicus (strain ATCC 29096 / DSM 1053 / JCM 10044 / NBRC 100330 / Delta H) (Methanobacterium thermoautotrophicum).